A 126-amino-acid polypeptide reads, in one-letter code: Holo-[acyl-carrier-protein] synthase (126 aa).

Residues aspartate 8 and glutamate 57 each contribute to the Mg(2+) site.

This sequence belongs to the P-Pant transferase superfamily. AcpS family. The cofactor is Mg(2+).

Its subcellular location is the cytoplasm. It catalyses the reaction apo-[ACP] + CoA = holo-[ACP] + adenosine 3',5'-bisphosphate + H(+). In terms of biological role, transfers the 4'-phosphopantetheine moiety from coenzyme A to a Ser of acyl-carrier-protein. The protein is Holo-[acyl-carrier-protein] synthase of Halorhodospira halophila (strain DSM 244 / SL1) (Ectothiorhodospira halophila (strain DSM 244 / SL1)).